We begin with the raw amino-acid sequence, 186 residues long: Astacin-like metalloprotease toxin 5 (186 aa).

A Peptidase M12A domain is found at 1 to 186; that stretch reads NAVKYDQQLW…CHSKRKAELL (186 aa). 2 disulfide bridges follow: C42–C177 and C63–C84. H92 provides a ligand contact to Zn(2+). E93 is a catalytic residue. Positions 96 and 102 each coordinate Zn(2+). Residue N122 is glycosylated (N-linked (GlcNAc...) asparagine).

Monomer. Zn(2+) is required as a cofactor. As to expression, expressed by the venom gland.

The protein resides in the secreted. With respect to regulation, inhibited by 1,10-phenanthroline. Functionally, zinc metalloprotease. Provoques deadhesion of endothelial cells from cell cultures, and also degradation of fibronectin, fibrinogen and gelatin in vitro. Its role in the venom is not fully understood but it might act as a spreading factor that facilitates diffusion of other venom toxins. Alternatively, it might be involved in the proteolytic processing of other venom toxins or it might play a role in extra-oral digestion of prey. The sequence is that of Astacin-like metalloprotease toxin 5 from Loxosceles gaucho (Spider).